The chain runs to 601 residues: UvrABC system protein C (601 aa).

The GIY-YIG domain occupies 17–95 (TLPGVYRMLD…IKALAPRYNI (79 aa)). The 36-residue stretch at 204–239 (SELINELTRRMTAAAEAMAFEQAAELRDQIQALARV) folds into the UVR domain.

The protein belongs to the UvrC family. As to quaternary structure, interacts with UvrB in an incision complex.

Its subcellular location is the cytoplasm. Its function is as follows. The UvrABC repair system catalyzes the recognition and processing of DNA lesions. UvrC both incises the 5' and 3' sides of the lesion. The N-terminal half is responsible for the 3' incision and the C-terminal half is responsible for the 5' incision. The polypeptide is UvrABC system protein C (Chromobacterium violaceum (strain ATCC 12472 / DSM 30191 / JCM 1249 / CCUG 213 / NBRC 12614 / NCIMB 9131 / NCTC 9757 / MK)).